Consider the following 702-residue polypeptide: Palmitoyltransferase AKR1 (702 aa).

Residues 1–40 (MSTDAELQTISGLSVASKSAPSTQTEGVTASGKVESTTNA) are compositionally biased toward polar residues. Residues 1–51 (MSTDAELQTISGLSVASKSAPSTQTEGVTASGKVESTTNAEEATSDVEEEE) are disordered. Residues 1 to 299 (MSTDAELQTI…TTNLLCFFTP (299 aa)) lie on the Cytoplasmic side of the membrane. 6 ANK repeats span residues 49 to 80 (EEEN…VLDT), 83 to 112 (DGVT…VVDA), 117 to 147 (LNGT…PLRS), 150 to 179 (QGYN…PVDC), 183 to 212 (NGRT…DVKI), and 216 to 245 (QGFL…DMYA). The next 2 membrane-spanning stretches (helical) occupy residues 300–320 (FILI…FGII) and 321–341 (LTVA…LPSL). The Cytoplasmic segment spans residues 342–354 (YNGHAALLKSPFQ). Residues 355-375 (AGIFTGSAFWVTVKYLTSVLP) traverse the membrane as a helical segment. Over 376–379 (ATFA) the chain is Lumenal. A helical membrane pass occupies residues 380–400 (SHPILNFFFASIFGLAMYCFF). At 401–479 (RCMSMDPGYI…WNAIGVRNHR (79 aa)) the chain is on the cytoplasmic side. The 51-residue stretch at 436-486 (HFCFVTYVRKPLRSKFCRQSKRVVARFDHFCPWVWNAIGVRNHRMFVLYVL) folds into the DHHC domain. The S-palmitoyl cysteine intermediate role is filled by C466. A helical transmembrane segment spans residues 480 to 500 (MFVLYVLFLQIGIPLWLALNS). Residues 501–518 (AYFGELLEIKRWDPLEFY) lie on the Lumenal side of the membrane. Residues 519-539 (LVIWISLQLIWITFLSFVQIF) traverse the membrane as a helical segment. Topologically, residues 540–702 (QICRSLTTSE…GEALLAESQV (163 aa)) are cytoplasmic. The interval 679-702 (PNQQQTNNRSTREDGEALLAESQV) is disordered.

It belongs to the DHHC palmitoyltransferase family. AKR/ZDHHC17 subfamily.

The protein resides in the early endosome membrane. Its subcellular location is the golgi apparatus membrane. The enzyme catalyses L-cysteinyl-[protein] + hexadecanoyl-CoA = S-hexadecanoyl-L-cysteinyl-[protein] + CoA. In terms of biological role, palmitoyltransferase specific for casein kinase 1. The polypeptide is Palmitoyltransferase AKR1 (AKR1) (Yarrowia lipolytica (strain CLIB 122 / E 150) (Yeast)).